We begin with the raw amino-acid sequence, 139 residues long: Ribulose bisphosphate carboxylase small subunit (139 aa).

Belongs to the RuBisCO small chain family. Heterohexadecamer of 8 large and 8 small subunits.

It is found in the plastid. Its subcellular location is the chloroplast. In terms of biological role, ruBisCO catalyzes two reactions: the carboxylation of D-ribulose 1,5-bisphosphate, the primary event in carbon dioxide fixation, as well as the oxidative fragmentation of the pentose substrate in the photorespiration process. Both reactions occur simultaneously and in competition at the same active site. Although the small subunit is not catalytic it is essential for maximal activity. The polypeptide is Ribulose bisphosphate carboxylase small subunit (Trieres chinensis (Marine centric diatom)).